The primary structure comprises 237 residues: 7-cyano-7-deazaguanine synthase (237 aa).

Residue 9-19 (YSGGLDSTTCL) participates in ATP binding. Zn(2+) contacts are provided by cysteine 189, cysteine 199, cysteine 202, and cysteine 205.

It belongs to the QueC family. Zn(2+) is required as a cofactor.

The catalysed reaction is 7-carboxy-7-deazaguanine + NH4(+) + ATP = 7-cyano-7-deazaguanine + ADP + phosphate + H2O + H(+). It participates in purine metabolism; 7-cyano-7-deazaguanine biosynthesis. In terms of biological role, catalyzes the ATP-dependent conversion of 7-carboxy-7-deazaguanine (CDG) to 7-cyano-7-deazaguanine (preQ(0)). In Geobacter sulfurreducens (strain ATCC 51573 / DSM 12127 / PCA), this protein is 7-cyano-7-deazaguanine synthase.